A 152-amino-acid polypeptide reads, in one-letter code: D-aminoacyl-tRNA deacylase (152 aa).

The short motif at 137–138 (GP) is the Gly-cisPro motif, important for rejection of L-amino acids element.

It belongs to the DTD family. In terms of assembly, homodimer.

The protein localises to the cytoplasm. It catalyses the reaction glycyl-tRNA(Ala) + H2O = tRNA(Ala) + glycine + H(+). It carries out the reaction a D-aminoacyl-tRNA + H2O = a tRNA + a D-alpha-amino acid + H(+). Functionally, an aminoacyl-tRNA editing enzyme that deacylates mischarged D-aminoacyl-tRNAs. Also deacylates mischarged glycyl-tRNA(Ala), protecting cells against glycine mischarging by AlaRS. Acts via tRNA-based rather than protein-based catalysis; rejects L-amino acids rather than detecting D-amino acids in the active site. By recycling D-aminoacyl-tRNA to D-amino acids and free tRNA molecules, this enzyme counteracts the toxicity associated with the formation of D-aminoacyl-tRNA entities in vivo and helps enforce protein L-homochirality. This chain is D-aminoacyl-tRNA deacylase, found in Geobacillus sp. (strain WCH70).